The following is a 165-amino-acid chain: Cathelicidin-7 (165 aa).

The signal sequence occupies residues 1 to 29 (METQRASFSLGRSSLWLLLLGLVVPSASA). Residues 30-130 (QDLSYREAVL…FDITCNNIQS (101 aa)) constitute a propeptide that is removed on maturation. 2 disulfides stabilise this stretch: Cys86–Cys97 and Cys108–Cys125. Arg164 is modified (arginine amide).

This sequence belongs to the cathelicidin family. Expressed in bone marrow myeloid cells, spleen and testis.

Its subcellular location is the secreted. Functionally, exerts a potent antimicrobial activity. In Bos taurus (Bovine), this protein is Cathelicidin-7 (CATHL7).